The chain runs to 473 residues: Vasculin (473 aa).

3 disordered regions span residues 1–25 (MAQH…SSLN), 44–170 (RRRH…SRTP), and 186–341 (SGFP…HQER). Ser49 bears the Phosphoserine mark. Arg87 bears the Omega-N-methylarginine mark. Over residues 94–117 (NSRSRSSIFHSGKSQGLHENSIPD) the composition is skewed to polar residues. The span at 119–133 (ETGRKEDKRERRQFE) shows a compositional bias: basic and acidic residues. Polar residues-rich tracts occupy residues 193–204 (NLQSQPVKNGTG) and 248–286 (NFNT…QQPR). 4 positions are modified to phosphoserine: Ser274, Ser276, Ser322, and Ser381. Positions 293–329 (MRSDKKSEFLKALKRDRVEEEHEDESHAGSEKDDDSF) are enriched in basic and acidic residues. The tract at residues 450–473 (TFKPTIENDDTETSSSDTSDDDDV) is disordered. The segment covering 456 to 473 (ENDDTETSSSDTSDDDDV) has biased composition (acidic residues).

It belongs to the vasculin family. Interacts with GTF2B, GTF2F2, RNA polymerase II and TBP. Ubiquitously expressed (at protein level).

It localises to the nucleus. Functionally, functions as a GC-rich promoter-specific transactivating transcription factor. In Mus musculus (Mouse), this protein is Vasculin (Gpbp1).